The sequence spans 235 residues: Ribitol-5-phosphate cytidylyltransferase (235 aa).

CTP-binding positions include 7–10 (LAGG), 82–88 (GADRNTS), and Ser113.

It belongs to the IspD/TarI cytidylyltransferase family. TarI subfamily.

The catalysed reaction is D-ribitol 5-phosphate + CTP + H(+) = CDP-L-ribitol + diphosphate. It participates in cell wall biogenesis; poly(ribitol phosphate) teichoic acid biosynthesis. Functionally, catalyzes the transfer of the cytidylyl group of CTP to D-ribitol 5-phosphate. This Streptococcus pneumoniae (strain ATCC 700669 / Spain 23F-1) protein is Ribitol-5-phosphate cytidylyltransferase.